We begin with the raw amino-acid sequence, 207 residues long: Thiamine-phosphate synthase (207 aa).

Residues 37 to 41 and Asn-69 each bind 4-amino-2-methyl-5-(diphosphooxymethyl)pyrimidine; that span reads QYRDK. 2 residues coordinate Mg(2+): Asp-70 and Asp-89. Ser-108 provides a ligand contact to 4-amino-2-methyl-5-(diphosphooxymethyl)pyrimidine. 135–137 is a 2-[(2R,5Z)-2-carboxy-4-methylthiazol-5(2H)-ylidene]ethyl phosphate binding site; it reads SRT. Lys-138 contacts 4-amino-2-methyl-5-(diphosphooxymethyl)pyrimidine. Gly-164 is a binding site for 2-[(2R,5Z)-2-carboxy-4-methylthiazol-5(2H)-ylidene]ethyl phosphate.

The protein belongs to the thiamine-phosphate synthase family. Requires Mg(2+) as cofactor.

The catalysed reaction is 2-[(2R,5Z)-2-carboxy-4-methylthiazol-5(2H)-ylidene]ethyl phosphate + 4-amino-2-methyl-5-(diphosphooxymethyl)pyrimidine + 2 H(+) = thiamine phosphate + CO2 + diphosphate. The enzyme catalyses 2-(2-carboxy-4-methylthiazol-5-yl)ethyl phosphate + 4-amino-2-methyl-5-(diphosphooxymethyl)pyrimidine + 2 H(+) = thiamine phosphate + CO2 + diphosphate. It catalyses the reaction 4-methyl-5-(2-phosphooxyethyl)-thiazole + 4-amino-2-methyl-5-(diphosphooxymethyl)pyrimidine + H(+) = thiamine phosphate + diphosphate. Its pathway is cofactor biosynthesis; thiamine diphosphate biosynthesis; thiamine phosphate from 4-amino-2-methyl-5-diphosphomethylpyrimidine and 4-methyl-5-(2-phosphoethyl)-thiazole: step 1/1. Functionally, condenses 4-methyl-5-(beta-hydroxyethyl)thiazole monophosphate (THZ-P) and 2-methyl-4-amino-5-hydroxymethyl pyrimidine pyrophosphate (HMP-PP) to form thiamine monophosphate (TMP). This is Thiamine-phosphate synthase from Chromobacterium violaceum (strain ATCC 12472 / DSM 30191 / JCM 1249 / CCUG 213 / NBRC 12614 / NCIMB 9131 / NCTC 9757 / MK).